The following is a 287-amino-acid chain: Probable endonuclease 4 (287 aa).

Zn(2+)-binding residues include H69, H109, E144, D178, H181, H215, D228, H230, and E260.

This sequence belongs to the AP endonuclease 2 family. The cofactor is Zn(2+).

The enzyme catalyses Endonucleolytic cleavage to 5'-phosphooligonucleotide end-products.. Endonuclease IV plays a role in DNA repair. It cleaves phosphodiester bonds at apurinic or apyrimidinic (AP) sites, generating a 3'-hydroxyl group and a 5'-terminal sugar phosphate. The protein is Probable endonuclease 4 of Thermotoga sp. (strain RQ2).